Here is a 574-residue protein sequence, read N- to C-terminus: Dihydroxy-acid dehydratase 2 (574 aa).

The segment at 1-20 (MNAKTNIKQRLPSRHVTEGP) is disordered. Position 56 (C56) interacts with [2Fe-2S] cluster. D88 lines the Mg(2+) pocket. C129 serves as a coordination point for [2Fe-2S] cluster. D130 and K131 together coordinate Mg(2+). K131 carries the post-translational modification N6-carboxylysine. [2Fe-2S] cluster is bound at residue C201. E451 serves as a coordination point for Mg(2+). The active-site Proton acceptor is S477.

It belongs to the IlvD/Edd family. In terms of assembly, homodimer. [2Fe-2S] cluster serves as cofactor. Requires Mg(2+) as cofactor.

It catalyses the reaction (2R)-2,3-dihydroxy-3-methylbutanoate = 3-methyl-2-oxobutanoate + H2O. The catalysed reaction is (2R,3R)-2,3-dihydroxy-3-methylpentanoate = (S)-3-methyl-2-oxopentanoate + H2O. It functions in the pathway amino-acid biosynthesis; L-isoleucine biosynthesis; L-isoleucine from 2-oxobutanoate: step 3/4. Its pathway is amino-acid biosynthesis; L-valine biosynthesis; L-valine from pyruvate: step 3/4. Functions in the biosynthesis of branched-chain amino acids. Catalyzes the dehydration of (2R,3R)-2,3-dihydroxy-3-methylpentanoate (2,3-dihydroxy-3-methylvalerate) into 2-oxo-3-methylpentanoate (2-oxo-3-methylvalerate) and of (2R)-2,3-dihydroxy-3-methylbutanoate (2,3-dihydroxyisovalerate) into 2-oxo-3-methylbutanoate (2-oxoisovalerate), the penultimate precursor to L-isoleucine and L-valine, respectively. In Bradyrhizobium diazoefficiens (strain JCM 10833 / BCRC 13528 / IAM 13628 / NBRC 14792 / USDA 110), this protein is Dihydroxy-acid dehydratase 2.